Reading from the N-terminus, the 408-residue chain is uncharacterized protein (408 aa).

The segment at 49 to 77 (PRSSPEVQRKATAGENSEVGSPESSLSTS) is disordered. Polar residues predominate over residues 62–77 (GENSEVGSPESSLSTS). The F-box domain maps to 124–170 (SFEFMQLPDTDICQIMSFLDAQSLLNLSQTCSHLRQLCLAHEDNAGK).

This is an uncharacterized protein from Caenorhabditis elegans.